We begin with the raw amino-acid sequence, 203 residues long: Dual-action ribosomal maturation protein DarP (203 aa).

2 disordered regions span residues 1–31 and 183–203; these read MRPMTRKTRIQPIEHAVEDDDNGYDRPSKSQ and GASDSDDEAAGDAGDDHDDEA. Over residues 186 to 203 the composition is skewed to acidic residues; sequence DSDDEAAGDAGDDHDDEA.

It belongs to the DarP family.

The protein localises to the cytoplasm. Member of a network of 50S ribosomal subunit biogenesis factors which assembles along the 30S-50S interface, preventing incorrect 23S rRNA structures from forming. Promotes peptidyl transferase center (PTC) maturation. This Burkholderia cenocepacia (strain ATCC BAA-245 / DSM 16553 / LMG 16656 / NCTC 13227 / J2315 / CF5610) (Burkholderia cepacia (strain J2315)) protein is Dual-action ribosomal maturation protein DarP.